The sequence spans 192 residues: Akirin-1 (192 aa).

A disordered region spans residues 17 to 71 (LLSPGSPKRRRCAPLPGPTPGLRPPDAEPPPPFQTQTPPQSLQQPAPPGSERRLP). A Phosphoserine modification is found at Ser-22. Positions 23-28 (PKRRRC) match the Nuclear localization signal motif. Positions 31-49 (LPGPTPGLRPPDAEPPPPF) are enriched in pro residues. Low complexity predominate over residues 50-60 (QTQTPPQSLQQ). At Thr-72 the chain carries Phosphothreonine. Positions 104–122 (ASESQPHSSALTAPSSPGS) are enriched in polar residues. The tract at residues 104-127 (ASESQPHSSALTAPSSPGSSWMKK) is disordered. The SYVS motif signature appears at 189–192 (SYVS).

The protein belongs to the akirin family. Widely expressed with the highest expression in heart, liver, placenta and peripheral blood leukocytes.

It localises to the nucleus. Molecular adapter that acts as a bridge between proteins, and which is involved skeletal muscle development. Functions as a signal transducer for MSTN during skeletal muscle regeneration and myogenesis. May regulate chemotaxis of both macrophages and myoblasts by reorganising actin cytoskeleton, leading to more efficient lamellipodia formation via a PI3 kinase dependent pathway. In contrast to AKIRIN2, not involved in nuclear import of proteasomes. In Homo sapiens (Human), this protein is Akirin-1.